The primary structure comprises 547 residues: Phenylalanine--tRNA ligase beta subunit (547 aa).

Residues 269–344 (LDVRFMEVDV…IGYGYENITP (76 aa)) form the B5 domain. Mg(2+) contacts are provided by D322, D328, E331, and D332.

This sequence belongs to the phenylalanyl-tRNA synthetase beta subunit family. Type 2 subfamily. In terms of assembly, tetramer of two alpha and two beta subunits. It depends on Mg(2+) as a cofactor.

It localises to the cytoplasm. The catalysed reaction is tRNA(Phe) + L-phenylalanine + ATP = L-phenylalanyl-tRNA(Phe) + AMP + diphosphate + H(+). This Archaeoglobus fulgidus (strain ATCC 49558 / DSM 4304 / JCM 9628 / NBRC 100126 / VC-16) protein is Phenylalanine--tRNA ligase beta subunit.